Here is a 353-residue protein sequence, read N- to C-terminus: MKFVLFAQLAAVAAPAIAIDLAVQAGQHVMYSYPGLTPPESLYKLTSEGKVGGLIIFKENVNSNLPAIMDKFQALYKASPAYNGHPMIITTDQEGGNVRRVPGGPSQSARQIGDSSTPMQAASQAGRDAAAALKAQKINGNLAPVLDIYREEGNFIDEFGRSFGNNTEIVTSCGSAFAISQSRSGVLSTVKHFPGLGAAKKGENTDLVPIKIDLSLDEIRTFDEVPYRTAIRNGVDLIMTSWAVYPSLDAKYPAGLSRKWTTDELRTRLGYKGVIITDAIEAGSLKSFGNDGQRGVLAAKAGVDILLASGRNATQGEAIVNEIVAALKKGTLSMTEFQESSKRIQALQSRLSA.

The N-terminal stretch at 1–18 (MKFVLFAQLAAVAAPAIA) is a signal peptide. The interval 94–119 (EGGNVRRVPGGPSQSARQIGDSSTPM) is disordered. The segment covering 105 to 119 (PSQSARQIGDSSTPM) has biased composition (polar residues). N-linked (GlcNAc...) asparagine glycosylation is found at N165 and N312.

It belongs to the glycosyl hydrolase 3 family.

It is found in the secreted. This is an uncharacterized protein from Arthroderma benhamiae (strain ATCC MYA-4681 / CBS 112371) (Trichophyton mentagrophytes).